The chain runs to 400 residues: Phosphoglycerate kinase (400 aa).

Substrate-binding positions include 23–25 (DLN), arginine 38, 61–64 (HFGR), arginine 120, and arginine 153. ATP is bound by residues lysine 203, glutamate 325, and 355–358 (GGDT).

It belongs to the phosphoglycerate kinase family. Monomer.

Its subcellular location is the cytoplasm. The enzyme catalyses (2R)-3-phosphoglycerate + ATP = (2R)-3-phospho-glyceroyl phosphate + ADP. It functions in the pathway carbohydrate degradation; glycolysis; pyruvate from D-glyceraldehyde 3-phosphate: step 2/5. In Methylorubrum extorquens (strain CM4 / NCIMB 13688) (Methylobacterium extorquens), this protein is Phosphoglycerate kinase.